The chain runs to 302 residues: Glutamyl-Q tRNA(Asp) synthetase (302 aa).

Residues 13–17 and D49 each bind L-glutamate; that span reads RFAPS. Positions 16–26 match the 'HIGH' region motif; sequence PSPTGPLHLGS. Zn(2+)-binding residues include C105, C107, Y119, and C123. The L-glutamate site is built by Y178 and R196. The 'KMSKS' region motif lies at 234–238; that stretch reads KLSKQ. Residue K237 coordinates ATP.

This sequence belongs to the class-I aminoacyl-tRNA synthetase family. GluQ subfamily. Requires Zn(2+) as cofactor.

In terms of biological role, catalyzes the tRNA-independent activation of glutamate in presence of ATP and the subsequent transfer of glutamate onto a tRNA(Asp). Glutamate is transferred on the 2-amino-5-(4,5-dihydroxy-2-cyclopenten-1-yl) moiety of the queuosine in the wobble position of the QUC anticodon. This Methylococcus capsulatus (strain ATCC 33009 / NCIMB 11132 / Bath) protein is Glutamyl-Q tRNA(Asp) synthetase.